The chain runs to 150 residues: Natriuretic peptides A (150 aa).

Residues 1-24 (MSSFTITVSFLLVLVFQFPGQTRA) form the signal peptide. 2 propeptides span residues 25 to 122 (NPVY…AAPR) and 92 to 102 (DGGALGRGPWD). A disordered region spans residues 77–100 (LEVPPWTGEVNPAQRDGGALGRGP). The residue at position 128 (Ser128) is a Phosphoserine. Cys129 and Cys145 are disulfide-bonded.

The protein belongs to the natriuretic peptide family. In terms of assembly, homodimer; disulfide-linked antiparallel dimer. The precursor molecule is proteolytically cleaved by CORIN at Arg-122 to produce the atrial natriuretic peptide. Undergoes further proteolytic cleavage by unknown proteases to give rise to long-acting natriuretic peptide, vessel dilator and kaliuretic peptide. Additional processing gives rise to the auriculin and atriopeptin peptides. In the kidneys, alternative processing by an unknown protease results in the peptide urodilatin. In terms of processing, cleavage by MME initiates degradation of the factor and thereby regulates its activity. Degradation by IDE results in reduced activation of NPR1 (in vitro). During IDE degradation, the resulting products can temporarily stimulate NPR2 to produce cGMP, before the fragments are completely degraded and inactivated by IDE (in vitro). Post-translationally, degraded by IDE. Phosphorylation on Ser-128 decreases vasorelaxant activity. As to expression, brain (at protein level).

Its subcellular location is the secreted. It localises to the perikaryon. The protein localises to the cell projection. In terms of biological role, hormone that plays a key role in mediating cardio-renal homeostasis, and is involved in vascular remodeling and regulating energy metabolism. Acts by specifically binding and stimulating NPR1 to produce cGMP, which in turn activates effector proteins, such as PRKG1, that drive various biological responses. Regulates vasodilation, natriuresis, diuresis and aldosterone synthesis and is therefore essential for regulating blood pressure, controlling the extracellular fluid volume and maintaining the fluid-electrolyte balance. Also involved in inhibiting cardiac remodeling and cardiac hypertrophy by inducing cardiomyocyte apoptosis and attenuating the growth of cardiomyocytes and fibroblasts. Plays a role in female pregnancy by promoting trophoblast invasion and spiral artery remodeling in uterus, and thus prevents pregnancy-induced hypertension. In adipose tissue, acts in various cGMP- and PKG-dependent pathways to regulate lipid metabolism and energy homeostasis. This includes up-regulating lipid metabolism and mitochondrial oxygen utilization by activating the AMP-activated protein kinase (AMPK), and increasing energy expenditure by acting via MAPK11 to promote the UCP1-dependent thermogenesis of brown adipose tissue. Binds the clearance receptor NPR3 which removes the hormone from circulation. Its function is as follows. May have a role in cardio-renal homeostasis through regulation of natriuresis, diuresis, vasodilation, and inhibiting aldosterone synthesis. In vitro, promotes the production of cGMP and induces vasodilation. May promote natriuresis, at least in part, by enhancing prostaglandin E2 synthesis resulting in the inhibition of renal Na+-K+-ATPase. However reports on the involvement of this peptide in mammal blood volume and blood pressure homeostasis are conflicting; according to a report, in vivo it is not sufficient to activate cGMP and does not inhibit collecting duct transport nor effect diuresis and natriuresis. Appears to bind to specific receptors that are distinct from the receptors bound by atrial natriuretic peptide and vessel dilator. Possibly enhances protein excretion in urine by decreasing proximal tubular protein reabsorption. May have a role in cardio-renal homeostasis through regulation of natriuresis, diuresis, and vasodilation. In vitro, promotes the production of cGMP and induces vasodilation. May promote natriuresis, at least in part, by enhancing prostaglandin E2 synthesis resulting in the inhibition of renal Na+-K+-ATPase. However reports on the involvement of this peptide in mammal blood volume and blood pressure homeostasis are conflicting; according to a report it is not sufficient to activate cGMP and does not inhibit collecting duct transport nor effect diuresis and natriuresis. Appears to bind to specific receptors that are distinct from the receptors bound by the atrial natriuretic and long-acting natriuretic peptides. Possibly functions in protein excretion in urine by maintaining the integrity of the proximal tubules and enhancing protein excretion by decreasing proximal tubular protein reabsorption. Functionally, may have a role in cardio-renal homeostasis through regulation of diuresis and inhibiting aldosterone synthesis. In vitro, promotes the production of cGMP and induces vasodilation. May promote natriuresis, at least in part, by enhancing prostaglandin E2 synthesis resulting in the inhibition of renal Na+-K+-ATPase. May have a role in potassium excretion but not sodium excretion (natriuresis). Possibly enhances protein excretion in urine by decreasing proximal tubular protein reabsorption. In terms of biological role, hormone produced in the kidneys that appears to be important for maintaining cardio-renal homeostasis. Mediates vasodilation, natriuresis and diuresis primarily in the renal system, in order to maintain the extracellular fluid volume and control the fluid-electrolyte balance. Specifically binds and stimulates cGMP production by renal transmembrane receptors, likely NPR1. Urodilatin not ANP, may be the natriuretic peptide responsible for the regulation of sodium and water homeostasis in the kidney. Its function is as follows. May have a role in cardio-renal homeostasis through regulation of natriuresis and vasodilation. In vivo promotes natriuresis and in vitro, vasodilates renal artery strips. May have a role in cardio-renal homeostasis through regulation of regulation of natriuresis and vasodilation. In vivo promotes natriuresis. In vitro, vasodilates intestinal smooth muscle but not smooth muscle strips. Functionally, may have a role in cardio-renal homeostasis through regulation of natriuresis and vasodilation. In vivo promotes natriuresis. In vitro, selectively vasodilates intestinal and vascular smooth muscle strips. In terms of biological role, may have a role in cardio-renal homeostasis through regulation of natriuresis and vasodilation. In vivo promotes natriuresis. In vitro, selectively vasodilates intestinal smooth muscle but not vascular smooth muscle strips. This Sus scrofa (Pig) protein is Natriuretic peptides A (NPPA).